The primary structure comprises 550 residues: Hydroxylamine reductase (550 aa).

[2Fe-2S] cluster contacts are provided by cysteine 3, cysteine 6, cysteine 18, and cysteine 25. Histidine 249, glutamate 273, cysteine 317, cysteine 405, cysteine 433, cysteine 458, glutamate 492, and lysine 494 together coordinate hybrid [4Fe-2O-2S] cluster. Cysteine 405 is subject to Cysteine persulfide.

The protein belongs to the HCP family. [2Fe-2S] cluster is required as a cofactor. The cofactor is hybrid [4Fe-2O-2S] cluster.

Its subcellular location is the cytoplasm. It carries out the reaction A + NH4(+) + H2O = hydroxylamine + AH2 + H(+). In terms of biological role, catalyzes the reduction of hydroxylamine to form NH(3) and H(2)O. The sequence is that of Hydroxylamine reductase from Escherichia fergusonii (strain ATCC 35469 / DSM 13698 / CCUG 18766 / IAM 14443 / JCM 21226 / LMG 7866 / NBRC 102419 / NCTC 12128 / CDC 0568-73).